The sequence spans 92 residues: UPF0223 protein SPy_1248/M5005_Spy0958 (92 aa).

This sequence belongs to the UPF0223 family.

This chain is UPF0223 protein SPy_1248/M5005_Spy0958, found in Streptococcus pyogenes serotype M1.